The following is a 947-amino-acid chain: Plasma membrane ATPase 2 (947 aa).

The disordered stretch occupies residues 1–103 (MSSTEAKQYK…TDGVHAGQRV (103 aa)). The Cytoplasmic segment spans residues 1–144 (MSSTEAKQYK…AEENESLIVK (144 aa)). Residues 7 to 22 (KQYKEKPSKEYLHASD) are compositionally biased toward basic and acidic residues. Low complexity predominate over residues 26 to 61 (PANNSAASSSSSSSTSTSASSSAAAVPRKAAAASAA). Acidic residues predominate over residues 62–74 (DDSDSDEDIDQLI). The helical transmembrane segment at 145 to 165 (FLMFFVGPIQFVMEAAAILAA) threads the bilayer. The Extracellular segment spans residues 166–169 (GLSD). The chain crosses the membrane as a helical span at residues 170–189 (WVDVGVICALLLLNASVGFI). Residues 190–320 (QEFQAGSIVD…VEGHFTEVLN (131 aa)) lie on the Cytoplasmic side of the membrane. A helical membrane pass occupies residues 321-342 (GIGIILLVLVIATLLLVWTACF). Topologically, residues 343–353 (YRTVGIVSILR) are extracellular. A helical transmembrane segment spans residues 354 to 376 (YTLGITIIGVPVGLPAVVTTTMA). Over 377–748 (VGAAYLAKKQ…IAILNNSLDI (372 aa)) the chain is Cytoplasmic. Aspartate 407 functions as the 4-aspartylphosphate intermediate in the catalytic mechanism. Mg(2+) contacts are provided by aspartate 663 and aspartate 667. A helical transmembrane segment spans residues 749–767 (NLIVFIAIFADVATLTIAY). The Extracellular segment spans residues 768–783 (DNAPYAPEPVKWNLPR). A helical transmembrane segment spans residues 784 to 803 (LWGMSIILGIVLAIGSWITL). The Cytoplasmic portion of the chain corresponds to 804 to 853 (TTMFLPNGGIIQNFGAMNGVMFLQISLTENWLIFVTRAAGPFWSSIPSWQ). A helical transmembrane segment spans residues 854–874 (LAGAVFAVDIIATMFTLFGWW). Residues 875–886 (SENWTDIVSVVR) lie on the Extracellular side of the membrane. Residues 887–903 (VWIWSIGIFCVLGGFYY) traverse the membrane as a helical segment. At 904–947 (IMSTSQAFDRLMNGKSLKEKKSTRSVEDFMAAMQRVSTQHEKSS) the chain is on the cytoplasmic side.

This sequence belongs to the cation transport ATPase (P-type) (TC 3.A.3) family. Type IIIA subfamily.

The protein resides in the cell membrane. It carries out the reaction ATP + H2O + H(+)(in) = ADP + phosphate + 2 H(+)(out). Functionally, the plasma membrane ATPase of plants and fungi is a hydrogen ion pump. The proton gradient it generates drives the active transport of nutrients by H(+)-symport. The resulting external acidification and/or internal alkinization may mediate growth responses. This is Plasma membrane ATPase 2 (PMA2) from Saccharomyces cerevisiae (strain ATCC 204508 / S288c) (Baker's yeast).